The primary structure comprises 349 residues: Serine/threonine-protein kinase SRK2A (349 aa).

The Protein kinase domain maps to 12–268; sequence YELVKDIGSG…IQEIKNHEWF (257 aa). ATP contacts are provided by residues 18 to 26 and Lys41; that span reads IGSGNFGVA. Residue Asp131 is the Proton acceptor of the active site. Positions 151-177 are activation loop; sequence DFGYSKSSLLHSQPKSTVGTPAYIAPE.

This sequence belongs to the protein kinase superfamily. Ser/Thr protein kinase family.

It carries out the reaction L-seryl-[protein] + ATP = O-phospho-L-seryl-[protein] + ADP + H(+). It catalyses the reaction L-threonyl-[protein] + ATP = O-phospho-L-threonyl-[protein] + ADP + H(+). Activated by osmotic stress and by abscisic acid (ABA). Activation by NaCl is dependent on ABA. Functionally, involved in early responses to osmotic stress. In Physcomitrium patens (Spreading-leaved earth moss), this protein is Serine/threonine-protein kinase SRK2A.